A 142-amino-acid chain; its full sequence is Transcription antitermination protein NusB (142 aa).

It belongs to the NusB family.

In terms of biological role, involved in transcription antitermination. Required for transcription of ribosomal RNA (rRNA) genes. Binds specifically to the boxA antiterminator sequence of the ribosomal RNA (rrn) operons. This chain is Transcription antitermination protein NusB, found in Trichlorobacter lovleyi (strain ATCC BAA-1151 / DSM 17278 / SZ) (Geobacter lovleyi).